A 78-amino-acid polypeptide reads, in one-letter code: Acyl carrier protein (78 aa).

One can recognise a Carrier domain in the interval Ser-2–Leu-77. Ser-37 is modified (O-(pantetheine 4'-phosphoryl)serine).

Belongs to the acyl carrier protein (ACP) family. 4'-phosphopantetheine is transferred from CoA to a specific serine of apo-ACP by AcpS. This modification is essential for activity because fatty acids are bound in thioester linkage to the sulfhydryl of the prosthetic group.

It localises to the cytoplasm. It functions in the pathway lipid metabolism; fatty acid biosynthesis. Carrier of the growing fatty acid chain in fatty acid biosynthesis. This is Acyl carrier protein from Acinetobacter baumannii (strain AB307-0294).